A 240-amino-acid polypeptide reads, in one-letter code: Uridylate kinase (240 aa).

13-16 contacts ATP; that stretch reads KASG. The tract at residues 21-26 is involved in allosteric activation by GTP; the sequence is GSQGFG. Position 55 (G55) interacts with UMP. Residues G56 and R60 each contribute to the ATP site. Residues D75 and 136–143 contribute to the UMP site; that span reads TGNPFFTT. 4 residues coordinate ATP: T163, Q164, Y169, and D172.

It belongs to the UMP kinase family. In terms of assembly, homohexamer.

Its subcellular location is the cytoplasm. The enzyme catalyses UMP + ATP = UDP + ADP. It functions in the pathway pyrimidine metabolism; CTP biosynthesis via de novo pathway; UDP from UMP (UMPK route): step 1/1. Allosterically activated by GTP. Inhibited by UTP. Catalyzes the reversible phosphorylation of UMP to UDP. This Brucella anthropi (strain ATCC 49188 / DSM 6882 / CCUG 24695 / JCM 21032 / LMG 3331 / NBRC 15819 / NCTC 12168 / Alc 37) (Ochrobactrum anthropi) protein is Uridylate kinase.